The chain runs to 463 residues: L-seryl-tRNA(Sec) selenium transferase (463 aa).

Lys-295 carries the N6-(pyridoxal phosphate)lysine modification.

This sequence belongs to the SelA family. In terms of assembly, homodecamer; pentamer of dimers. Binds only one seryl-tRNA(Sec) per dimer. Pyridoxal 5'-phosphate is required as a cofactor.

The protein resides in the cytoplasm. It carries out the reaction L-seryl-tRNA(Sec) + selenophosphate + H(+) = L-selenocysteinyl-tRNA(Sec) + phosphate. It participates in aminoacyl-tRNA biosynthesis; selenocysteinyl-tRNA(Sec) biosynthesis; selenocysteinyl-tRNA(Sec) from L-seryl-tRNA(Sec) (bacterial route): step 1/1. Functionally, converts seryl-tRNA(Sec) to selenocysteinyl-tRNA(Sec) required for selenoprotein biosynthesis. The polypeptide is L-seryl-tRNA(Sec) selenium transferase (Salmonella schwarzengrund (strain CVM19633)).